A 675-amino-acid chain; its full sequence is Acetyl-coenzyme A synthetase 2 (675 aa).

Residues 206 to 209 (RGGK) and T325 contribute to the CoA site. ATP is bound by residues 401–403 (GEP), 425–430 (DTMWQT), D516, and R531. Position 539 (S539) interacts with CoA. An ATP-binding site is contributed by R542. R604 is a CoA binding site.

It belongs to the ATP-dependent AMP-binding enzyme family.

It carries out the reaction acetate + ATP + CoA = acetyl-CoA + AMP + diphosphate. This is Acetyl-coenzyme A synthetase 2 (ACS2) from Zygosaccharomyces bailii.